The following is a 121-amino-acid chain: Large ribosomal subunit protein bL31 (121 aa).

The large ribosomal subunit protein bL31 stretch occupies residues 1–97 (MKEGIHPDYK…AKENRAAKRA (97 aa)). Residues Cys16, Cys18, Cys36, and Cys39 each contribute to the Zn(2+) site. Residues 65–80 (ATPAKAEPAKKAPAAE) show a composition bias toward low complexity. Positions 65-121 (ATPAKAEPAKKAPAAEPAKKVEAAKENRAAKRAKAGKSKKSEAAPAAEAPAADAKPE) are disordered. Positions 74–121 (KKAPAAEPAKKVEAAKENRAAKRAKAGKSKKSEAAPAAEAPAADAKPE) are unknown. Positions 81–93 (PAKKVEAAKENRA) are enriched in basic and acidic residues. Residues 107 to 121 (AAPAAEAPAADAKPE) are compositionally biased toward low complexity.

This sequence belongs to the bacterial ribosomal protein bL31 family. Type A subfamily. Part of the 50S ribosomal subunit. Requires Zn(2+) as cofactor.

Functionally, binds the 23S rRNA. This Anaeromyxobacter dehalogenans (strain 2CP-C) protein is Large ribosomal subunit protein bL31.